Reading from the N-terminus, the 351-residue chain is Pentatricopeptide repeat-containing protein At3g56030, mitochondrial (351 aa).

A mitochondrion-targeting transit peptide spans Met-1–Phe-41. PPR repeat units lie at residues Arg-124–Leu-158, Ser-159–Val-193, Asp-194–Glu-224, and Asp-232–Val-266.

This sequence belongs to the PPR family. P subfamily.

The protein resides in the mitochondrion. This chain is Pentatricopeptide repeat-containing protein At3g56030, mitochondrial, found in Arabidopsis thaliana (Mouse-ear cress).